We begin with the raw amino-acid sequence, 247 residues long: MNVLSYSINTLEGLYEISGVEVGQHFYWKIGGFQVHAQVLITSWVVIVILLGSAIVTVRNPQTIPTDGQNFFEYILEFIRDVSKTQIGEEYGPWVPFIGTLFLFIFVSNWSGALLPWKIIELPHGELAAPTNDINTTVALALLTSIAYFYAGLSKKGLGYFGKYIQPTPILLPINILEDFTKPLSLSFRLFGNILADELVVVVLVSLVPSVVPIPVMFLGLFTSGIQALIFATLAAAYIGESMEGHH.

5 helical membrane passes run 38–58, 95–115, 134–154, 199–219, and 220–240; these read QVLITSWVVIVILLGSAIVTV, VPFIGTLFLFIFVSNWSGALL, INTTVALALLTSIAYFYAGLS, LVVVVLVSLVPSVVPIPVMFL, and GLFTSGIQALIFATLAAAYIG.

Belongs to the ATPase A chain family. F-type ATPases have 2 components, CF(1) - the catalytic core - and CF(0) - the membrane proton channel. CF(1) has five subunits: alpha(3), beta(3), gamma(1), delta(1), epsilon(1). CF(0) has four main subunits: a, b, b' and c.

It localises to the plastid. Its subcellular location is the chloroplast thylakoid membrane. Its function is as follows. Key component of the proton channel; it plays a direct role in the translocation of protons across the membrane. This chain is ATP synthase subunit a, chloroplastic, found in Populus alba (White poplar).